Consider the following 982-residue polypeptide: Protein cramped (982 aa).

Disordered stretches follow at residues 1–37, 71–111, 323–349, 407–456, and 822–851; these read MEELSKQPPPPPLTQPPPPSSSVSIEEPLPNGKGGGA, QKMK…GSGK, SLPSAASNNNNNNNETEPLQPSVASLD, NKRL…SSGD, and GTSSAGISTSGSKPDCSMNAMTASQDQEPG. Positions 7–20 are enriched in pro residues; that stretch reads QPPPPPLTQPPPPS. A compositionally biased stretch (low complexity) spans 21 to 30; it reads SSVSIEEPLP. Positions 86–98 are enriched in basic and acidic residues; sequence SEREPNKKEEKAA. The segment covering 100–111 has biased composition (polar residues); sequence KTPSQLKTGSGK. In terms of domain architecture, SANT spans 109–173; sequence SGKTTWTNVE…HYYQTHHKIC (65 aa). Residues 410–425 show a composition bias toward basic and acidic residues; the sequence is LRTESGSEKRSPETKK. Phosphoserine occurs at positions 431 and 437. The span at 822–833 shows a compositional bias: low complexity; it reads GTSSAGISTSGS.

The protein belongs to the cramped family. Ubiquitously expressed throughout embryonic development. High expression is detected in CNS and gonads.

Its subcellular location is the nucleus. In terms of biological role, polycomb group (Pc-G) genes are needed to maintain expression patterns of the homeotic selector genes of the Antennapedia (Antp-C) and Bithorax (Bx-C) complexes, and hence for the maintenance of segmental determination. Can act as a modifier of position effect variegation (PEV). This chain is Protein cramped (crm), found in Drosophila melanogaster (Fruit fly).